A 283-amino-acid polypeptide reads, in one-letter code: Pantothenate synthetase (283 aa).

30–37 (MGALHEGH) is an ATP binding site. His37 acts as the Proton donor in catalysis. Gln61 provides a ligand contact to (R)-pantoate. A beta-alanine-binding site is contributed by Gln61. Position 147 to 150 (147 to 150 (GEKD)) interacts with ATP. Gln153 provides a ligand contact to (R)-pantoate. ATP is bound by residues Val176 and 184–187 (VSSR).

This sequence belongs to the pantothenate synthetase family. Homodimer.

Its subcellular location is the cytoplasm. The enzyme catalyses (R)-pantoate + beta-alanine + ATP = (R)-pantothenate + AMP + diphosphate + H(+). It participates in cofactor biosynthesis; (R)-pantothenate biosynthesis; (R)-pantothenate from (R)-pantoate and beta-alanine: step 1/1. In terms of biological role, catalyzes the condensation of pantoate with beta-alanine in an ATP-dependent reaction via a pantoyl-adenylate intermediate. The protein is Pantothenate synthetase of Chlorobium limicola (strain DSM 245 / NBRC 103803 / 6330).